The following is a 381-amino-acid chain: Homoserine O-succinyltransferase (381 aa).

An AB hydrolase-1 domain is found at Asn-45–Asp-360. Catalysis depends on Ser-151, which acts as the Nucleophile. Arg-221 lines the substrate pocket. Active-site residues include Asp-321 and His-354. Asp-355 serves as a coordination point for substrate.

The protein belongs to the AB hydrolase superfamily. MetX family. As to quaternary structure, homodimer.

It is found in the cytoplasm. It catalyses the reaction L-homoserine + succinyl-CoA = O-succinyl-L-homoserine + CoA. The protein operates within amino-acid biosynthesis; L-methionine biosynthesis via de novo pathway; O-succinyl-L-homoserine from L-homoserine: step 1/1. In terms of biological role, transfers a succinyl group from succinyl-CoA to L-homoserine, forming succinyl-L-homoserine. This chain is Homoserine O-succinyltransferase, found in Burkholderia pseudomallei (strain 1710b).